The chain runs to 105 residues: Nucleoid-associated protein lin2851 (105 aa).

Residues 1 to 16 (MRGMGNMQGMMKQMQK) show a composition bias toward low complexity. The interval 1-23 (MRGMGNMQGMMKQMQKMQKEMAK) is disordered.

Belongs to the YbaB/EbfC family. As to quaternary structure, homodimer.

The protein resides in the cytoplasm. It is found in the nucleoid. Functionally, binds to DNA and alters its conformation. May be involved in regulation of gene expression, nucleoid organization and DNA protection. In Listeria innocua serovar 6a (strain ATCC BAA-680 / CLIP 11262), this protein is Nucleoid-associated protein lin2851.